The sequence spans 464 residues: Argininosuccinate lyase (464 aa).

This sequence belongs to the lyase 1 family. Argininosuccinate lyase subfamily.

The protein resides in the cytoplasm. It carries out the reaction 2-(N(omega)-L-arginino)succinate = fumarate + L-arginine. It functions in the pathway amino-acid biosynthesis; L-arginine biosynthesis; L-arginine from L-ornithine and carbamoyl phosphate: step 3/3. The polypeptide is Argininosuccinate lyase (Desulfotalea psychrophila (strain LSv54 / DSM 12343)).